Reading from the N-terminus, the 524-residue chain is Rho guanine nucleotide exchange factor 3 (524 aa).

A phosphoserine mark is found at S46 and S69. Residues 121–303 (KRQEAIFELS…QGIVAEINTK (183 aa)) form the DH domain. Positions 290–448 (INIIQGIVAE…WLNCIRQAKE (159 aa)) constitute a PH domain. The segment at 461–524 (DSEGLVQGPG…CANSRPEESV (64 aa)) is disordered. The segment covering 472 to 484 (ENREPQGETKLEQ) has biased composition (basic and acidic residues).

Interacts with RHOA and RHOB.

Its subcellular location is the cytoplasm. Functionally, acts as a guanine nucleotide exchange factor (GEF) for RhoA and RhoB GTPases. The chain is Rho guanine nucleotide exchange factor 3 (Arhgef3) from Mus musculus (Mouse).